We begin with the raw amino-acid sequence, 399 residues long: S-adenosylmethionine synthase (399 aa).

Residue His17 participates in ATP binding. Mg(2+) is bound at residue Asp19. Glu45 is a binding site for K(+). L-methionine contacts are provided by Glu58 and Gln101. Residues 101–111 form a flexible loop region; it reads QSPDIAQGVDE. ATP is bound by residues 177 to 179, 244 to 245, Asp253, 259 to 260, Ala276, and Lys280; these read DAK, RF, and RK. Residue Asp253 participates in L-methionine binding. An L-methionine-binding site is contributed by Lys284.

Belongs to the AdoMet synthase family. Homotetramer; dimer of dimers. Mg(2+) is required as a cofactor. It depends on K(+) as a cofactor.

It localises to the cytoplasm. It catalyses the reaction L-methionine + ATP + H2O = S-adenosyl-L-methionine + phosphate + diphosphate. It functions in the pathway amino-acid biosynthesis; S-adenosyl-L-methionine biosynthesis; S-adenosyl-L-methionine from L-methionine: step 1/1. Catalyzes the formation of S-adenosylmethionine (AdoMet) from methionine and ATP. The overall synthetic reaction is composed of two sequential steps, AdoMet formation and the subsequent tripolyphosphate hydrolysis which occurs prior to release of AdoMet from the enzyme. In Listeria monocytogenes serovar 1/2a (strain ATCC BAA-679 / EGD-e), this protein is S-adenosylmethionine synthase.